The following is a 78-amino-acid chain: U-scoloptoxin(04)-Er1b (78 aa).

Positions 1 to 24 are cleaved as a signal peptide; that stretch reads MTRHLIFAAVLLVCLFVCWNAVGA. A propeptide spanning residues 25–28 is cleaved from the precursor; sequence QDAR.

The protein belongs to the scoloptoxin-04 family. Contains 2 disulfide bonds. Expressed by the venom gland.

The protein localises to the secreted. The sequence is that of U-scoloptoxin(04)-Er1b from Ethmostigmus rubripes (Giant centipede).